A 138-amino-acid polypeptide reads, in one-letter code: Acidic phospholipase A2 BE-I-PLA2 (138 aa).

Positions 1 to 16 (MRTLWIMAVLLVGVEG) are cleaved as a signal peptide. 7 cysteine pairs are disulfide-bonded: C42/C131, C44/C60, C59/C111, C65/C138, C66/C104, C73/C97, and C91/C102. Ca(2+)-binding residues include Y43, G45, and G47. The active site involves H63. D64 provides a ligand contact to Ca(2+). The active site involves D105.

It belongs to the phospholipase A2 family. Group II subfamily. D49 sub-subfamily. Ca(2+) serves as cofactor. In terms of tissue distribution, expressed by the venom gland.

The protein localises to the secreted. The catalysed reaction is a 1,2-diacyl-sn-glycero-3-phosphocholine + H2O = a 1-acyl-sn-glycero-3-phosphocholine + a fatty acid + H(+). Its function is as follows. Snake venom phospholipase A2 that shows a potent inhibition of human platelet aggregation. This inhibition is concentration-dependent when aggregation is induced by collagen, and concentration-independent when aggregation is induced by arachidonic acid. In human umbilical-cord vein endothelial cells, this toxin stimulates endothelial cells to release prostaglandin I(2), suggesting an increase of its potential anti-platelet activity in vivo. PLA2 catalyzes the calcium-dependent hydrolysis of the 2-acyl groups in 3-sn-phosphoglycerides. The polypeptide is Acidic phospholipase A2 BE-I-PLA2 (Bothrops erythromelas (Caatinga lance head)).